The chain runs to 1272 residues: AF4/FMR2 family member 2 (1272 aa).

Disordered regions lie at residues 151 to 190 (SNRKSKSEWPRDSHNTSPAQASQTSSQPNKMQTSTQDPPQ), 204 to 231 (PQIGTVEKSNPSSKEENNPNSGGEDTFK), 372 to 401 (TLQKWSDPSSRASTKMLEDDLKLSSDEDDL), 422 to 497 (KAKP…QLDK), 557 to 694 (IREK…ETLQ), 715 to 743 (TLSTLTNGNSNNLSTSNEETAFSPPPAMQ), and 772 to 899 (PGQN…QDKN). A compositionally biased stretch (basic and acidic residues) spans 155 to 164 (SKSEWPRDSH). Residues 165–179 (NTSPAQASQTSSQPN) show a composition bias toward low complexity. Over residues 180-189 (KMQTSTQDPP) the composition is skewed to polar residues. Residues 210 to 227 (EKSNPSSKEENNPNSGGE) show a composition bias toward low complexity. Residues 374–384 (QKWSDPSSRAS) show a composition bias toward polar residues. Residues 387 to 396 (MLEDDLKLSS) are compositionally biased toward basic and acidic residues. Phosphoserine is present on Ser-395. Polar residues predominate over residues 436-450 (TPQSTPATQTNVGSG). At Thr-482 the chain carries Phosphothreonine. The span at 580 to 590 (STSVDTVSQRT) shows a compositional bias: polar residues. The span at 620–633 (PKEKGSVELPDPPR) shows a compositional bias: basic and acidic residues. The span at 634 to 644 (SRNKATAHKPV) shows a compositional bias: basic residues. Residues 715-734 (TLSTLTNGNSNNLSTSNEET) are compositionally biased toward low complexity. Residues 815 to 831 (PAETAEKIPEKKQRLED) are compositionally biased toward basic and acidic residues. Over residues 841 to 850 (CISPAPPHKP) the composition is skewed to pro residues. Over residues 887-899 (VSGNNGHFGQDKN) the composition is skewed to polar residues.

The protein belongs to the AF4 family. As to expression, highly expressed in the hippocampus, the piriform cortex, Purkinje cells and the cingulate gyrus.

The protein resides in the nucleus speckle. In terms of biological role, RNA-binding protein. Might be involved in alternative splicing regulation through an interaction with G-quartet RNA structure. The polypeptide is AF4/FMR2 family member 2 (Mus musculus (Mouse)).